A 218-amino-acid chain; its full sequence is uncharacterized protein (218 aa).

Helical transmembrane passes span C14–S34 and L175–V195.

To H.pylori HP0270.

The protein localises to the cell membrane. This is an uncharacterized protein from Rickettsia prowazekii (strain Madrid E).